The primary structure comprises 146 residues: KMGPVLCHLVPYAQGLAVQVSTITLTVIALDRHRCIVYHLESKISKQISFLIIGLAWGVSALLASPLAIFREYSLIEIIPDFEIVACTEKWPGEEKGIYGTVYSLLSLLILYVLPLGIISFSYARIWSKLKNHVSPGAAHDHYHQR.

Over K1–H8 the chain is Extracellular. A disulfide bridge connects residues C7 and C87. A helical membrane pass occupies residues L9–A29. Residues L30 to S49 are Cytoplasmic-facing. Residues F50 to F70 traverse the membrane as a helical segment. Residues R71–G100 lie on the Extracellular side of the membrane. Residues T101–F121 form a helical membrane-spanning segment. Topologically, residues S122–R146 are cytoplasmic.

It belongs to the G-protein coupled receptor 1 family.

The protein localises to the cell membrane. Its function is as follows. Receptor for neuropeptide Y and peptide YY. The polypeptide is Neuropeptide Y receptor type 2 (NPY2R) (Ovis aries (Sheep)).